Here is a 339-residue protein sequence, read N- to C-terminus: Anthranilate phosphoribosyltransferase (339 aa).

5-phospho-alpha-D-ribose 1-diphosphate contacts are provided by residues Gly81, 84–85 (GD), Ser89, 91–94 (NVSS), 109–117 (KHGNRALSS), and Ala121. Gly81 contributes to the anthranilate binding site. Ser93 provides a ligand contact to Mg(2+). Residue Asn112 participates in anthranilate binding. Anthranilate is bound at residue Arg167. Mg(2+)-binding residues include Asp225 and Glu226.

It belongs to the anthranilate phosphoribosyltransferase family. In terms of assembly, homodimer. Mg(2+) serves as cofactor.

It carries out the reaction N-(5-phospho-beta-D-ribosyl)anthranilate + diphosphate = 5-phospho-alpha-D-ribose 1-diphosphate + anthranilate. It functions in the pathway amino-acid biosynthesis; L-tryptophan biosynthesis; L-tryptophan from chorismate: step 2/5. Its function is as follows. Catalyzes the transfer of the phosphoribosyl group of 5-phosphorylribose-1-pyrophosphate (PRPP) to anthranilate to yield N-(5'-phosphoribosyl)-anthranilate (PRA). This is Anthranilate phosphoribosyltransferase from Brucella ovis (strain ATCC 25840 / 63/290 / NCTC 10512).